The sequence spans 506 residues: MSFSVEVLAGIAIELQRGIGHQDRFQRLITTLRQVLACDASALLRYESGQFIPLAIDGLAQDVLGRRFTLEGHPRLEAIARAGDVVRFPADSDLPDPYDGLIPGQESLKVHACVGLPLFAGQNLIGALTFDAMTPAQFEVFSDEELRLIAALAAGALSNALLIEQLESQNMLPRSSAAFEPIKETHMIGLSPAMTQLKKEIEIVASSDLNVLIGGETGTGKELVAKAIHQGSPRAVNPLVYLNCAALPESVAESELFGHVKGAFTGAISNRSGKFEMADNGTLFLDEIGELSLALQAKLLRVLQYGDIQRVGDDRSLRVDVRVLAATNRDLREEVLAGRFRADLFHRLSVFPLFVPPLRERGNDVVLLAGYFCEQCRLRLGLSRVVLSPGARRHLLNYGWPGNVRELEHAIHRAVVLARATRAGDEVILEAQHFALSEDVLPAPPAESFLALPNCRNLRESTENFQRELIRQALAQNHHNWAASARALETDVANLHRLAKRLGLKD.

4-aspartylphosphate is present on D57. In terms of domain architecture, Sigma-54 factor interaction spans 187–416; the sequence is MIGLSPAMTQ…LEHAIHRAVV (230 aa). ATP is bound by residues 215–222 and 278–287; these read GETGTGKE and ADNGTLFLDE. A DNA-binding region (H-T-H motif) is located at residues 481–500; it reads WAASARALETDVANLHRLAK.

It participates in nitrogen metabolism; nitric oxide reduction. Its function is as follows. Required for the expression of anaerobic nitric oxide (NO) reductase, acts as a transcriptional activator for at least the norVW operon. Activation also requires sigma-54. This is Anaerobic nitric oxide reductase transcription regulator NorR from Salmonella arizonae (strain ATCC BAA-731 / CDC346-86 / RSK2980).